A 247-amino-acid chain; its full sequence is Carboxy-S-adenosyl-L-methionine synthase (247 aa).

S-adenosyl-L-methionine-binding positions include Tyr-39, 64–66 (GCS), 89–90 (DN), 117–118 (DI), Asn-132, and Arg-199.

The protein belongs to the class I-like SAM-binding methyltransferase superfamily. Cx-SAM synthase family. As to quaternary structure, homodimer.

It carries out the reaction prephenate + S-adenosyl-L-methionine = carboxy-S-adenosyl-L-methionine + 3-phenylpyruvate + H2O. In terms of biological role, catalyzes the conversion of S-adenosyl-L-methionine (SAM) to carboxy-S-adenosyl-L-methionine (Cx-SAM). This chain is Carboxy-S-adenosyl-L-methionine synthase, found in Salmonella choleraesuis (strain SC-B67).